The sequence spans 447 residues: Trigger factor (447 aa).

The region spanning 159-244 is the PPIase FKBP-type domain; the sequence is GDMLLMQVES…VREIKEEKLP (86 aa).

This sequence belongs to the FKBP-type PPIase family. Tig subfamily.

Its subcellular location is the cytoplasm. It carries out the reaction [protein]-peptidylproline (omega=180) = [protein]-peptidylproline (omega=0). Involved in protein export. Acts as a chaperone by maintaining the newly synthesized protein in an open conformation. Functions as a peptidyl-prolyl cis-trans isomerase. The sequence is that of Trigger factor from Dehalococcoides mccartyi (strain ATCC BAA-2100 / JCM 16839 / KCTC 5957 / BAV1).